The following is a 312-amino-acid chain: MAALCNNLRAKLVSWQPVGLFHTGVRLLAADKDLLVKLRKKTGYSFMNCKKALEQCANDFKQAETWLHQQAQKEGWDKASKLQGRKTKEGLVGLLQDGSTSVMVEVNCETDFVARNSKFQQLVQQVAVSTLRHCQSHPENTSSYVKGFLCGDELLQLKADESLKDQLALAIGKLGENMIMKRAAWVKTPSDIFVGSYMHGILMADLPSLTNMTFGKYGALVICKDSDGNLKSNISEIGRRLGQHVVGMNPLLVGSLEDESGGETETKMLAQPFLLEPSLTVGQYLQPRGINVLDFIRFECGEEAESTESTPT.

The protein belongs to the EF-Ts family.

The protein localises to the mitochondrion. Functionally, associates with the EF-Tu.GDP complex and induces the exchange of GDP to GTP. It remains bound to the aminoacyl-tRNA.EF-Tu.GTP complex up to the GTP hydrolysis stage on the ribosome. This chain is Elongation factor Ts, mitochondrial (tsfm), found in Xenopus laevis (African clawed frog).